We begin with the raw amino-acid sequence, 142 residues long: Large ribosomal subunit protein uL11 (142 aa).

The protein belongs to the universal ribosomal protein uL11 family. In terms of assembly, part of the ribosomal stalk of the 50S ribosomal subunit. Interacts with L10 and the large rRNA to form the base of the stalk. L10 forms an elongated spine to which L12 dimers bind in a sequential fashion forming a multimeric L10(L12)X complex. In terms of processing, one or more lysine residues are methylated.

Its function is as follows. Forms part of the ribosomal stalk which helps the ribosome interact with GTP-bound translation factors. This chain is Large ribosomal subunit protein uL11, found in Shigella boydii serotype 4 (strain Sb227).